A 321-amino-acid polypeptide reads, in one-letter code: Gap junction delta-2 protein (321 aa).

Over Met1–Ser19 the chain is Cytoplasmic. A helical membrane pass occupies residues Thr20–Gly42. Topologically, residues Glu43–His75 are extracellular. Residues Ile76–Val98 form a helical membrane-spanning segment. Residues His99 to Arg197 lie on the Cytoplasmic side of the membrane. The interval Pro120 to Glu141 is disordered. Gly residues predominate over residues Gly125–Gly137. Residues Phe198–Leu220 form a helical membrane-spanning segment. Residues Tyr221–Val252 lie on the Extracellular side of the membrane. A helical membrane pass occupies residues Phe253–Leu275. At Gly276–Val321 the chain is on the cytoplasmic side.

It belongs to the connexin family. Delta-type subfamily. As to quaternary structure, a connexon is composed of a hexamer of connexins. Highly expressed in neurons.

The protein resides in the cell membrane. The protein localises to the cell junction. It is found in the gap junction. In terms of biological role, one gap junction consists of a cluster of closely packed pairs of transmembrane channels, the connexons, through which materials of low MW diffuse from one cell to a neighboring cell. This is Gap junction delta-2 protein (Gjd2) from Rattus norvegicus (Rat).